The following is a 269-amino-acid chain: MGSLTTNIVLAVAVVAALVGGGSCGPPKVPPGPNITTNYNAPWLPARATWYGQPYGSGSTDNGGACGIKNVNLPPYNGMISCGNVPIFKDGRGCGSCYEVKCEQPAACSKQPVTVFITDMNYEPISAYHFDFSGKAFGAMACPGKETELRKAGIIDMQFRRVRCKYPGGQKVTFHVEKGSNPNYLAVLVKFVADDGDVIQMDLQEAGLPAWRPMKLSWGAIWRMDTATPLKAPFSIRVTTESGKSLIAKDVIPVNWMPDAIYVSNVQFY.

An N-terminal signal peptide occupies residues 1 to 24 (MGSLTTNIVLAVAVVAALVGGGSC). Asn-34 carries N-linked (GlcNAc...) asparagine glycosylation. The Expansin-like EG45 domain occupies 63–169 (GGACGIKNVN…RRVRCKYPGG (107 aa)). 3 disulfides stabilise this stretch: Cys-66/Cys-94, Cys-97/Cys-164, and Cys-102/Cys-108. One can recognise an Expansin-like CBD domain in the interval 183–264 (NYLAVLVKFV…NWMPDAIYVS (82 aa)).

It belongs to the expansin family. Expansin B subfamily.

The protein localises to the secreted. It is found in the cell wall. Its subcellular location is the membrane. Its function is as follows. May cause loosening and extension of plant cell walls by disrupting non-covalent bonding between cellulose microfibrils and matrix glucans. No enzymatic activity has been found. May be required for rapid internodal elongation in deepwater rice during submergence. The chain is Expansin-B9 (EXPB9) from Oryza sativa subsp. japonica (Rice).